Reading from the N-terminus, the 125-residue chain is E4-ORF1 (125 aa).

The PDZ-binding signature appears at 122–125 (ATLV).

The protein belongs to the dUTPase family. In terms of assembly, binds to human MPDZ.

Its subcellular location is the host cytoplasm. It carries out the reaction dUTP + H2O = dUMP + diphosphate + H(+). Plays a key role in virus oncogenecity in animals. Binds and sequesters human MUPP1/MPDZ protein in the cytoplasm, preventing it from playing a role in cellular proliferation regulation. Induces cell transformation, probably by inactivating MPDZ protein. The polypeptide is E4-ORF1 (E4) (Homo sapiens (Human)).